Consider the following 107-residue polypeptide: Putative ATP synthase subunit f, mitochondrial (107 aa).

Belongs to the ATPase F chain family. In terms of assembly, F-type ATPases have 2 components, CF(1) - the catalytic core - and CF(0) - the membrane proton channel. CF(0) seems to have nine subunits: a, b, c, d, e, f, g, F6 and 8 (or A6L).

It is found in the mitochondrion membrane. Functionally, mitochondrial membrane ATP synthase (F(1)F(0) ATP synthase or Complex V) produces ATP from ADP in the presence of a proton gradient across the membrane which is generated by electron transport complexes of the respiratory chain. F-type ATPases consist of two structural domains, F(1) - containing the extramembraneous catalytic core and F(0) - containing the membrane proton channel, linked together by a central stalk and a peripheral stalk. During catalysis, ATP synthesis in the catalytic domain of F(1) is coupled via a rotary mechanism of the central stalk subunits to proton translocation. Part of the complex F(0) domain. Minor subunit located with subunit a in the membrane. The chain is Putative ATP synthase subunit f, mitochondrial from Drosophila melanogaster (Fruit fly).